The primary structure comprises 139 residues: Natriuretic peptides A (139 aa).

The N-terminal stretch at 1–21 (MTALVLWGLLLLLGQHTQVNS) is a signal peptide. A propeptide spanning residues 22–114 (HVLGRPFSAS…QDLLMSLRKR (93 aa)) is cleaved from the precursor. The cysteines at positions 118 and 134 are disulfide-linked.

This sequence belongs to the natriuretic peptide family.

It localises to the secreted. Its function is as follows. Hormone playing a key role in cardiovascular homeostasis through regulation of natriuresis, diuresis, and vasodilation. Has a cGMP-stimulating activity. In Takifugu rubripes (Japanese pufferfish), this protein is Natriuretic peptides A (nppa).